Reading from the N-terminus, the 161-residue chain is Small heat shock protein ibp (161 aa).

In terms of domain architecture, sHSP spans 35–150 (EKPLSDTPAY…KPKKIFINIP (116 aa)).

It belongs to the small heat shock protein (HSP20) family.

This Buchnera aphidicola subsp. Schizaphis graminum (strain Sg) protein is Small heat shock protein ibp (ibp).